A 158-amino-acid polypeptide reads, in one-letter code: Transcription elongation factor GreA (158 aa).

This sequence belongs to the GreA/GreB family.

Its function is as follows. Necessary for efficient RNA polymerase transcription elongation past template-encoded arresting sites. The arresting sites in DNA have the property of trapping a certain fraction of elongating RNA polymerases that pass through, resulting in locked ternary complexes. Cleavage of the nascent transcript by cleavage factors such as GreA or GreB allows the resumption of elongation from the new 3'terminus. GreA releases sequences of 2 to 3 nucleotides. In Methylobacterium sp. (strain 4-46), this protein is Transcription elongation factor GreA.